We begin with the raw amino-acid sequence, 960 residues long: Protein mono-ADP-ribosyltransferase PARP10 (960 aa).

At Glu-103 the chain carries ADP-ribosyl glutamic acid. Positions 325 to 341 (SMGSTSPVDPVESSTEL) are enriched in polar residues. The interval 325-346 (SMGSTSPVDPVESSTELPEQVG) is disordered. Ser-381 and Ser-388 each carry phosphoserine. Residues 553-576 (SPHGGEDRVPLEMEKEKPGGPGET) form a disordered region. Over residues 555–570 (HGGEDRVPLEMEKEKP) the composition is skewed to basic and acidic residues. Residues 604 to 621 (LEEEATLQLAIHRSLESQ) carry the Ubiquitin-interacting motif. Residue Ser-617 is modified to Phosphoserine. The tract at residues 649-856 (DEDTGGEAQL…CAHGFNRSFC (208 aa)) is myc binding. The PARP catalytic domain maps to 755–960 (PNLSEQGLKE…TCKNILPGTP (206 aa)). The short motif at 780 to 787 (QDVVRAFY) is the PIP-box element. Residue Glu-831 is modified to ADP-ribosyl glutamic acid.

The protein belongs to the ARTD/PARP family. As to quaternary structure, interacts with MYC. Interacts with PARP14. Interacts (via-PIP box and ubiquitin-interacting motifs) with PCNA. In terms of processing, stimulated through its phosphorylation by CDK2. Acquires CDK-dependent phosphorylation through late-G1 to S phase, and from prometaphase to cytokinesis in the nucleolar organizing regions. Phosphorylation is suppressed in growth-arrested cells. Auto-mono-ADP-ribosylated on glutamate and lysine residues.

Its subcellular location is the cytoplasm. It localises to the nucleus. It catalyses the reaction L-lysyl-[protein] + NAD(+) = N(6)-(ADP-D-ribosyl)-L-lysyl-[protein] + nicotinamide + H(+). The enzyme catalyses L-aspartyl-[protein] + NAD(+) = 4-O-(ADP-D-ribosyl)-L-aspartyl-[protein] + nicotinamide. It carries out the reaction L-glutamyl-[protein] + NAD(+) = 5-O-(ADP-D-ribosyl)-L-glutamyl-[protein] + nicotinamide. ADP-ribosyltransferase that mediates mono-ADP-ribosylation of glutamate and aspartate residues on target proteins. In contrast to PARP1 and PARP2, it is not able to mediate poly-ADP-ribosylation. Catalyzes mono-ADP-ribosylation of GSK3B, leading to negatively regulate GSK3B kinase activity. Involved in translesion DNA synthesis in response to DNA damage via its interaction with PCNA. The sequence is that of Protein mono-ADP-ribosyltransferase PARP10 from Mus musculus (Mouse).